Consider the following 216-residue polypeptide: Mediator of RNA polymerase II transcription subunit 6 (216 aa).

Residues 157–187 (YPKLSNDNLEVDHSNTNEPADENKNQSIENA) form a disordered region.

It belongs to the Mediator complex subunit 6 family. Component of the Mediator complex.

It is found in the nucleus. In terms of biological role, component of the Mediator complex, a coactivator involved in the regulated transcription of nearly all RNA polymerase II-dependent genes. Mediator functions as a bridge to convey information from gene-specific regulatory proteins to the basal RNA polymerase II transcription machinery. Mediator is recruited to promoters by direct interactions with regulatory proteins and serves as a scaffold for the assembly of a functional preinitiation complex with RNA polymerase II and the general transcription factors. The chain is Mediator of RNA polymerase II transcription subunit 6 (med6) from Schizosaccharomyces pombe (strain 972 / ATCC 24843) (Fission yeast).